The sequence spans 440 residues: Cytochrome b (440 aa).

A helical membrane pass occupies residues 46–66 (IWGIVLAFCLVLQIATGIVLV). Residues histidine 97 and histidine 111 each contribute to the heme b site. 9 consecutive transmembrane segments (helical) span residues 100–120 (GASLFFLAVYIHIFRGLYYGS), 129–149 (WIVGMLIYLMMMGTAFMGYVL), 156–176 (FWGATVITGLFGAIPGVGEAI), 194–214 (FFSLHYLLPFVIAALVVVHIW), 253–273 (LFALAVVLVVFFAIVGFMPNY), 296–315 (WYFLPFYAILRAFTADVWVV), 330–350 (FFGVIAMFGAILVMALVPWLD), 365–385 (WWFWLLAVDFVVLMWVGAMPA), and 394–414 (LAGSAYWFAYFLIILPLLGII). The heme b site is built by histidine 198 and histidine 212.

Belongs to the cytochrome b family. The main subunits of complex b-c1 are: cytochrome b, cytochrome c1 and the Rieske protein. Heme b is required as a cofactor.

The protein resides in the cell membrane. Its function is as follows. Component of the ubiquinol-cytochrome c reductase complex (complex III or cytochrome b-c1 complex), which is a respiratory chain that generates an electrochemical potential coupled to ATP synthesis. The sequence is that of Cytochrome b (petB) from Paracoccus denitrificans.